A 132-amino-acid chain; its full sequence is Small ribosomal subunit protein uS8 (132 aa).

This sequence belongs to the universal ribosomal protein uS8 family. As to quaternary structure, part of the 30S ribosomal subunit. Contacts proteins S5 and S12.

In terms of biological role, one of the primary rRNA binding proteins, it binds directly to 16S rRNA central domain where it helps coordinate assembly of the platform of the 30S subunit. The chain is Small ribosomal subunit protein uS8 from Rhodococcus jostii (strain RHA1).